The sequence spans 198 residues: NAD(P)H dehydrogenase (quinone) (198 aa).

The Flavodoxin-like domain occupies 4–190 (ILVLYYSMYG…ILASFQGAHV (187 aa)). Residues 10-15 (SMYGHI) and 79-81 (TRF) contribute to the FMN site. Y12 provides a ligand contact to NAD(+). Substrate is bound at residue W99. Residues 114-119 (STGTGG) and H134 contribute to the FMN site.

This sequence belongs to the WrbA family. FMN serves as cofactor.

It catalyses the reaction a quinone + NADH + H(+) = a quinol + NAD(+). The enzyme catalyses a quinone + NADPH + H(+) = a quinol + NADP(+). This is NAD(P)H dehydrogenase (quinone) from Azotobacter vinelandii (strain DJ / ATCC BAA-1303).